The primary structure comprises 347 residues: Protein RecA (347 aa).

66–73 is an ATP binding site; sequence GPESSGKT.

This sequence belongs to the RecA family.

Its subcellular location is the cytoplasm. Can catalyze the hydrolysis of ATP in the presence of single-stranded DNA, the ATP-dependent uptake of single-stranded DNA by duplex DNA, and the ATP-dependent hybridization of homologous single-stranded DNAs. It interacts with LexA causing its activation and leading to its autocatalytic cleavage. This chain is Protein RecA, found in Methylococcus capsulatus (strain ATCC 33009 / NCIMB 11132 / Bath).